Here is a 213-residue protein sequence, read N- to C-terminus: Pyridoxine/pyridoxamine 5'-phosphate oxidase (213 aa).

Substrate-binding positions include 9–12 (RKDY) and K67. FMN contacts are provided by residues 62-67 (RIVLLK), 77-78 (FT), R83, K84, and Q106. The substrate site is built by Y124, R128, and S132. Residues 141–142 (QS) and W186 contribute to the FMN site. 192-194 (RLH) contributes to the substrate binding site. An FMN-binding site is contributed by R196.

Belongs to the pyridoxamine 5'-phosphate oxidase family. As to quaternary structure, homodimer. The cofactor is FMN.

It catalyses the reaction pyridoxamine 5'-phosphate + O2 + H2O = pyridoxal 5'-phosphate + H2O2 + NH4(+). The enzyme catalyses pyridoxine 5'-phosphate + O2 = pyridoxal 5'-phosphate + H2O2. It functions in the pathway cofactor metabolism; pyridoxal 5'-phosphate salvage; pyridoxal 5'-phosphate from pyridoxamine 5'-phosphate: step 1/1. Its pathway is cofactor metabolism; pyridoxal 5'-phosphate salvage; pyridoxal 5'-phosphate from pyridoxine 5'-phosphate: step 1/1. In terms of biological role, catalyzes the oxidation of either pyridoxine 5'-phosphate (PNP) or pyridoxamine 5'-phosphate (PMP) into pyridoxal 5'-phosphate (PLP). The chain is Pyridoxine/pyridoxamine 5'-phosphate oxidase from Cyanothece sp. (strain PCC 7425 / ATCC 29141).